The chain runs to 1155 residues: ATP-dependent helicase/deoxyribonuclease subunit B (1155 aa).

8-15 (GRSGSGKS) lines the ATP pocket. [4Fe-4S] cluster-binding residues include Cys-793, Cys-1115, Cys-1118, and Cys-1124.

This sequence belongs to the helicase family. AddB/RexB type 1 subfamily. Heterodimer of AddA and AddB. Mg(2+) is required as a cofactor. [4Fe-4S] cluster serves as cofactor.

Functionally, the heterodimer acts as both an ATP-dependent DNA helicase and an ATP-dependent, dual-direction single-stranded exonuclease. Recognizes the chi site generating a DNA molecule suitable for the initiation of homologous recombination. The AddB subunit has 5' -&gt; 3' nuclease activity but not helicase activity. The sequence is that of ATP-dependent helicase/deoxyribonuclease subunit B from Clostridioides difficile (strain 630) (Peptoclostridium difficile).